The sequence spans 306 residues: Ribonuclease Z (306 aa).

His63, His65, Asp67, His68, His140, Asp211, and His269 together coordinate Zn(2+). The Proton acceptor role is filled by Asp67.

This sequence belongs to the RNase Z family. As to quaternary structure, homodimer. It depends on Zn(2+) as a cofactor.

The catalysed reaction is Endonucleolytic cleavage of RNA, removing extra 3' nucleotides from tRNA precursor, generating 3' termini of tRNAs. A 3'-hydroxy group is left at the tRNA terminus and a 5'-phosphoryl group is left at the trailer molecule.. Zinc phosphodiesterase, which displays some tRNA 3'-processing endonuclease activity. Probably involved in tRNA maturation, by removing a 3'-trailer from precursor tRNA. This is Ribonuclease Z from Listeria monocytogenes serovar 1/2a (strain ATCC BAA-679 / EGD-e).